The chain runs to 153 residues: Endoribonuclease YbeY (153 aa).

Residues His114, His118, and His124 each coordinate Zn(2+).

This sequence belongs to the endoribonuclease YbeY family. Zn(2+) is required as a cofactor.

The protein resides in the cytoplasm. In terms of biological role, single strand-specific metallo-endoribonuclease involved in late-stage 70S ribosome quality control and in maturation of the 3' terminus of the 16S rRNA. The sequence is that of Endoribonuclease YbeY from Shewanella baltica (strain OS195).